The primary structure comprises 27 residues: Defensin-like protein 2 (27 aa).

At Gln1 the chain carries Pyrrolidone carboxylic acid.

It belongs to the DEFL family. In terms of assembly, forms oligomers in its native state.

Its function is as follows. Possesses some antifungal activity sensitive to inorganic cations and antibacterial activity against B.megaterium. This is Defensin-like protein 2 from Brassica campestris (Field mustard).